The sequence spans 119 residues: uncharacterized protein (119 aa).

2 helical membrane-spanning segments follow: residues 19–39 (FYPS…PSFL) and 68–88 (FPWF…PWLL).

It is found in the membrane. This is an uncharacterized protein from Saccharomyces cerevisiae (strain ATCC 204508 / S288c) (Baker's yeast).